The primary structure comprises 275 residues: tRNA pseudouridine synthase A (275 aa).

Catalysis depends on D62, which acts as the Nucleophile. Y124 lines the substrate pocket.

It belongs to the tRNA pseudouridine synthase TruA family. As to quaternary structure, homodimer.

It catalyses the reaction uridine(38/39/40) in tRNA = pseudouridine(38/39/40) in tRNA. In terms of biological role, formation of pseudouridine at positions 38, 39 and 40 in the anticodon stem and loop of transfer RNAs. The polypeptide is tRNA pseudouridine synthase A (Herminiimonas arsenicoxydans).